A 429-amino-acid chain; its full sequence is 3-phosphoshikimate 1-carboxyvinyltransferase (429 aa).

Residues lysine 20, serine 21, and arginine 25 each contribute to the 3-phosphoshikimate site. Lysine 20 lines the phosphoenolpyruvate pocket. 2 residues coordinate phosphoenolpyruvate: glycine 89 and arginine 118. Positions 164, 165, 166, 192, 311, and 338 each coordinate 3-phosphoshikimate. Glutamine 166 lines the phosphoenolpyruvate pocket. Aspartate 311 acts as the Proton acceptor in catalysis. Phosphoenolpyruvate-binding residues include arginine 342 and arginine 384.

This sequence belongs to the EPSP synthase family. In terms of assembly, monomer.

It is found in the cytoplasm. The catalysed reaction is 3-phosphoshikimate + phosphoenolpyruvate = 5-O-(1-carboxyvinyl)-3-phosphoshikimate + phosphate. It participates in metabolic intermediate biosynthesis; chorismate biosynthesis. Functionally, catalyzes the transfer of the enolpyruvyl moiety of phosphoenolpyruvate (PEP) to the 5-hydroxyl of shikimate-3-phosphate (S3P) to produce enolpyruvyl shikimate-3-phosphate and inorganic phosphate. This is 3-phosphoshikimate 1-carboxyvinyltransferase from Methanococcus maripaludis (strain DSM 14266 / JCM 13030 / NBRC 101832 / S2 / LL).